An 88-amino-acid chain; its full sequence is Large ribosomal subunit protein bL27 (88 aa).

The protein belongs to the bacterial ribosomal protein bL27 family.

The protein is Large ribosomal subunit protein bL27 of Mycolicibacterium smegmatis (strain ATCC 700084 / mc(2)155) (Mycobacterium smegmatis).